A 197-amino-acid chain; its full sequence is Recombination protein RecR (197 aa).

Residues 55–70 form a C4-type zinc finger; it reads CVQCRDFTESEICTIC. Positions 78 to 173 constitute a Toprim domain; it reads QQLCVVESPA…RPSRLAQGMP (96 aa).

The protein belongs to the RecR family.

Its function is as follows. May play a role in DNA repair. It seems to be involved in an RecBC-independent recombinational process of DNA repair. It may act with RecF and RecO. The chain is Recombination protein RecR from Xanthomonas euvesicatoria pv. vesicatoria (strain 85-10) (Xanthomonas campestris pv. vesicatoria).